Reading from the N-terminus, the 311-residue chain is Homeobox protein CDX-2 (311 aa).

S60 carries the post-translational modification Phosphoserine. The tract at residues 111 to 151 (EYHAHHHPHHHPHHPAASPSCASGLLQTLNLGPPGPAATAA) is disordered. Basic residues predominate over residues 114 to 124 (AHHHPHHHPHH). An interaction with DNA region spans residues 185–215 (KDKYRVVYTDHQRLELEKEFHFSRYITIRRK). The segment at residues 185–244 (KDKYRVVYTDHQRLELEKEFHFSRYITIRRKSELAATLGLSERQVKIWFQNRRAKERKIK) is a DNA-binding region (homeobox). The segment at 227 to 241 (RQVKIWFQNRRAKER) is interaction with 5-mCpG DNA. A disordered region spans residues 239 to 311 (KERKIKKKQQ…GGVLNSTVTQ (73 aa)). The segment covering 248-257 (QQQQQQQQQQ) has biased composition (low complexity). Pro residues predominate over residues 258–268 (PPQPPPQPSQP). S281 carries the phosphoserine; by CDK2 modification. The short motif at 281–293 (SPVTSLQGSVPGS) is the 4S motif; modulates transactivation activity and protein stability element. A compositionally biased stretch (low complexity) spans 285-298 (SLQGSVPGSVPGVL).

It belongs to the Caudal homeobox family. As to quaternary structure, can bind DNA as a monomer or homodimer. Ubiquitinated, leading to its degradation by the proteasome. Post-translationally, phosphorylation at Ser-60 reduces transactivation capacity. Phosphorylation at Ser-281 reduces transactivation capacity and increases ubiquitin-dependent proteasome degradation. As to expression, in the intestine, detected in ileum and proximal and distal colon (at protein level). In adult small intestine, predominantly localized in crypt and lower villus cells of the epithelium (at protein level). Expressed in the intestine but not detected in other tissues including stomach, liver, kidney, spleen, brain, heart, lung, pancreas, skeletal muscle and testis. Expressed specifically in gut epithelium where it is not restricted to a particular cell lineage. Abundant expression is seen in the proximal colon with slightly lower levels in distal colon. Expression in the proximal colon is not restricted either to a particular cell lineage or stage of differentiation while in the distal colon it is more abundant in the differentiated cells towards the top of the crypt.

The protein resides in the nucleus. Its function is as follows. Transcription factor which regulates the transcription of multiple genes expressed in the intestinal epithelium. Binds to the promoter of the intestinal sucrase-isomaltase SI and activates SI transcription. Binds to the DNA sequence 5'-ATAAAAACTTAT-3' in the promoter region of VDR and activates VDR transcription. Binds to and activates transcription of LPH. Activates transcription of CLDN2 and intestinal mucin MUC2. Binds to the 5'-AATTTTTTACAACACCT-3' DNA sequence in the promoter region of CA1 and activates CA1 transcription. Important in broad range of functions from early differentiation to maintenance of the intestinal epithelial lining of both the small and large intestine. Binds preferentially to methylated DNA. The chain is Homeobox protein CDX-2 (Cdx2) from Mus musculus (Mouse).